A 627-amino-acid chain; its full sequence is (R)-linalool synthase, chloroplastic (627 aa).

A chloroplast-targeting transit peptide spans M1–S21. Mg(2+) contacts are provided by D378, D382, and E530. The DDXXD motif signature appears at D378–D382.

Belongs to the terpene synthase family. Tpsd subfamily. It depends on Mg(2+) as a cofactor. The cofactor is Mn(2+).

It is found in the plastid. The protein resides in the chloroplast. The catalysed reaction is (2E)-geranyl diphosphate + H2O = (R)-linalool + diphosphate. It functions in the pathway terpene metabolism; oleoresin biosynthesis. Functionally, terpene synthase (TPS) involved in the biosynthesis of monoterpene natural products included in conifer oleoresin secretions and volatile emissions; these compounds contribute to biotic and abiotic stress defense against herbivores and pathogens. Catalyzes the conversion of (2E)-geranyl diphosphate (GPP) to (R)-linalool. This Picea glauca (White spruce) protein is (R)-linalool synthase, chloroplastic.